Here is a 228-residue protein sequence, read N- to C-terminus: MPTLILCRHGQSVWNAENLFTGWTDVDLSDQGVEEATTSGDRLKQEGIEIDVAFTSVLQRAIKTTYHLLERSNQLFVPLYKSWRLNERHYGGLQGLNKDAAREEFGEEQVHIWRRSYDIAPPDATAEQREADLADRKYQGLDERVIPTSESLKDTLERVIPYWNDAIAPELLTGKTVLVSAHGNSLRALIKHIEGVSDEDIVGYEIKTGAPLIYELDDNLGFVSKHYL.

Residues 8-15, 21-22, Arg-60, 87-90, Lys-98, 114-115, and 183-184 contribute to the substrate site; these read RHGQSVWN, TG, ERHY, RR, and GN. His-9 (tele-phosphohistidine intermediate) is an active-site residue. Glu-87 (proton donor/acceptor) is an active-site residue.

Belongs to the phosphoglycerate mutase family. BPG-dependent PGAM subfamily.

The enzyme catalyses (2R)-2-phosphoglycerate = (2R)-3-phosphoglycerate. Its pathway is carbohydrate degradation; glycolysis; pyruvate from D-glyceraldehyde 3-phosphate: step 3/5. In terms of biological role, catalyzes the interconversion of 2-phosphoglycerate and 3-phosphoglycerate. This chain is 2,3-bisphosphoglycerate-dependent phosphoglycerate mutase, found in Staphylococcus carnosus (strain TM300).